The chain runs to 853 residues: Aryl hydrocarbon receptor (853 aa).

The propeptide occupies 1-9 (MSSGANITY). The interval 1-38 (MSSGANITYASRKRRKPVQKTVKPVPAEGIKSNPSKRH) is disordered. 2 consecutive short sequence motifs (nuclear localization signal) follow at residues 12–15 (RKRR) and 36–41 (KRHRDR). The bHLH domain occupies 26–79 (PAEGIKSNPSKRHRDRLNTELDRLASLLPFPQDVINKLDKLSVLRLSVSYLRAK). The segment at 37–65 (RHRDRLNTELDRLASLLPFPQDVINKLDK) is DNA-binding. Required for maintaining the overall integrity of the AHR:ARNT heterodimer and its transcriptional activity stretches follow at residues 49–81 (LASL…AKSF), 116–124 (LLQALNGFV), and 264–266 (FAI). The short motif at 63–71 (LDKLSVLRL) is the Nuclear export signal element. The PAS 1 domain occupies 116–179 (LLQALNGFVL…RQLHWALNPS (64 aa)). The region spanning 273–340 (PSILEIRTKN…CAESHIRMIK (68 aa)) is the PAS 2 domain. A PAC domain is found at 346–384 (MTVFRLLAKHSRWRWVQSNARLIYRNGRPDYIIATQRPL). The disordered stretch occupies residues 429-451 (TKSNTSRKDWAPQSTPSKDSFHP). A compositionally biased stretch (polar residues) spans 440–451 (PQSTPSKDSFHP).

In terms of assembly, homodimer. Heterodimer; efficient DNA binding requires dimerization with another bHLH protein. Interacts with ARNT; the heterodimer ARNT:AHR binds to core DNA sequence 5'-TGCGTG-3' within the dioxin response element (DRE) of target gene promoters and activates their transcription. Binds MYBBP1A. Interacts with coactivators including SRC-1, RIP140 and NOCA7, and with the corepressor SMRT. Interacts with NEDD8 and IVNS1ABP. Interacts with BMAL1. Interacts with HSP90AB1. Interacts with TIPARP; leading to mono-ADP-ribosylation of AHR and subsequent inhibition of AHR. In terms of processing, mono-ADP-ribosylated, leading to inhibit transcription activator activity of AHR. Expressed in all tissues tested including brain, heart, kidney, liver, lung, spleen, skeletal muscle and thymus.

Its subcellular location is the cytoplasm. It is found in the nucleus. Ligand-activated transcription factor that enables cells to adapt to changing conditions by sensing compounds from the environment, diet, microbiome and cellular metabolism, and which plays important roles in development, immunity and cancer. Upon ligand binding, translocates into the nucleus, where it heterodimerizes with ARNT and induces transcription by binding to xenobiotic response elements (XRE). Regulates a variety of biological processes, including angiogenesis, hematopoiesis, drug and lipid metabolism, cell motility and immune modulation. Xenobiotics can act as ligands: upon xenobiotic-binding, activates the expression of multiple phase I and II xenobiotic chemical metabolizing enzyme genes (such as the CYP1A1 gene). Mediates biochemical and toxic effects of halogenated aromatic hydrocarbons. Next to xenobiotics, natural ligands derived from plants, microbiota, and endogenous metabolism are potent AHR agonists. Tryptophan (Trp) derivatives constitute an important class of endogenous AHR ligands. Acts as a negative regulator of anti-tumor immunity: indoles and kynurenic acid generated by Trp catabolism act as ligand and activate AHR, thereby promoting AHR-driven cancer cell motility and suppressing adaptive immunity. Regulates the circadian clock by inhibiting the basal and circadian expression of the core circadian component PER1. Inhibits PER1 by repressing the CLOCK-BMAL1 heterodimer mediated transcriptional activation of PER1. The heterodimer ARNT:AHR binds to core DNA sequence 5'-TGCGTG-3' within the dioxin response element (DRE) of target gene promoters and activates their transcription. This chain is Aryl hydrocarbon receptor (Ahr), found in Rattus norvegicus (Rat).